Here is a 444-residue protein sequence, read N- to C-terminus: Tol-Pal system protein TolB (444 aa).

Positions 1–18 (MRNIIYFILLLFSCTGYA) are cleaved as a signal peptide.

Belongs to the TolB family. The Tol-Pal system is composed of five core proteins: the inner membrane proteins TolA, TolQ and TolR, the periplasmic protein TolB and the outer membrane protein Pal. They form a network linking the inner and outer membranes and the peptidoglycan layer.

The protein resides in the periplasm. Its function is as follows. Part of the Tol-Pal system, which plays a role in outer membrane invagination during cell division and is important for maintaining outer membrane integrity. The chain is Tol-Pal system protein TolB from Rickettsia canadensis (strain McKiel).